Consider the following 213-residue polypeptide: GTP-binding protein YPTC4 (213 aa).

G13–C21 lines the GTP pocket. The short motif at H35–F43 is the Effector region element. GTP is bound by residues D61–Q65, N119–D122, and S149–R151. The disordered stretch occupies residues A194–C213. Residues C212 and C213 are each lipidated (S-geranylgeranyl cysteine).

This sequence belongs to the small GTPase superfamily. Rab family.

The protein resides in the cell membrane. Its function is as follows. Protein transport. Probably involved in vesicular traffic. The sequence is that of GTP-binding protein YPTC4 (YPTC4) from Chlamydomonas reinhardtii (Chlamydomonas smithii).